We begin with the raw amino-acid sequence, 308 residues long: Glutaminase (308 aa).

The substrate site is built by Ser-68, Asn-118, Glu-162, Asn-169, Tyr-193, Tyr-244, and Val-262.

The protein belongs to the glutaminase family. As to quaternary structure, homotetramer.

The enzyme catalyses L-glutamine + H2O = L-glutamate + NH4(+). This chain is Glutaminase, found in Hahella chejuensis (strain KCTC 2396).